Consider the following 138-residue polypeptide: Basic phospholipase A2 homolog acutohaemolysin (138 aa).

A signal peptide spans 1–16 (MRALWIVAVLLVGVEG). 7 disulfide bridges follow: C42–C131, C44–C60, C59–C111, C65–C138, C66–C104, C73–C97, and C91–C102. The tract at residues 121 to 133 (KSFRYHLKPSCKK) is important for membrane-damaging activities in eukaryotes and bacteria; heparin-binding.

In terms of assembly, monomer. In terms of tissue distribution, expressed by the venom gland.

It localises to the secreted. Functionally, snake venom phospholipase A2 homolog that lacks enzymatic activity. Is myotoxic. Has a strong indirect hemolytic activity and anticoagulant activity. A model of myotoxic mechanism has been proposed: an apo Lys49-PLA2 is activated by the entrance of a hydrophobic molecule (e.g. fatty acid) at the hydrophobic channel of the protein leading to a reorientation of a monomer. This reorientation causes a transition between 'inactive' to 'active' states, causing alignment of C-terminal and membrane-docking sites (MDoS) side-by-side and putting the membrane-disruption sites (MDiS) in the same plane, exposed to solvent and in a symmetric position for both monomers. The MDoS region stabilizes the toxin on membrane by the interaction of charged residues with phospholipid head groups. Subsequently, the MDiS region destabilizes the membrane with penetration of hydrophobic residues. This insertion causes a disorganization of the membrane, allowing an uncontrolled influx of ions (i.e. calcium and sodium), and eventually triggering irreversible intracellular alterations and cell death. This Deinagkistrodon acutus (Hundred-pace snake) protein is Basic phospholipase A2 homolog acutohaemolysin.